The sequence spans 194 residues: Serine/threonine-protein kinase mos (194 aa).

Residues 47 to 194 form the Protein kinase domain; the sequence is LCLLNLLGSG…HLDLKPANIF (148 aa). ATP-binding positions include 53–61 and lysine 74; that span reads LGSGGFGSV. Aspartate 187 (proton acceptor) is an active-site residue.

It belongs to the protein kinase superfamily. Ser/Thr protein kinase family.

It catalyses the reaction L-seryl-[protein] + ATP = O-phospho-L-seryl-[protein] + ADP + H(+). The catalysed reaction is L-threonyl-[protein] + ATP = O-phospho-L-threonyl-[protein] + ADP + H(+). This chain is Serine/threonine-protein kinase mos (MOS), found in Dendroaspis angusticeps (Eastern green mamba).